We begin with the raw amino-acid sequence, 109 residues long: DNILYSGETLSPGEFLNNGRYVFIMQEDCNLVLYDVDKPIWATNTGGLDRRCHLSMQSDGNLVVYSPRNNPIWASNTGGENGNYVCVLQKDRNVVIYGTARWATGTNIH.

Positions 25-109 constitute a Bulb-type lectin domain; it reads MQEDCNLVLY…ARWATGTNIH (85 aa). Gln26, Asp28, Asn30, Tyr34, Asp37, Lys38, Trp41, Ala42, Asn44, Gln57, Asp59, Asn61, Tyr65, Ile72, Trp73, Asn76, Asn83, Gln89, Asp91, Asn93, Tyr97, and Trp102 together coordinate alpha-D-mannopyranose. Cys29 and Cys52 are oxidised to a cystine.

As to quaternary structure, homotetramer; antiparallel. Detected in bulbs (at protein level).

The protein localises to the secreted. Strongly inhibited by alpha-1,6-linked mannotriose. Inhibited by various oligosaccharides of P.pastoris mannan including, Man(alpha-l,6)Man-alpha-O-Me, Man(alpha-l,2)Man, Man(alpha-l,3)Man-alpha-O-Me, Man(alpha-l,2)Man, alpha-1,2-linked mannotriose, and Man(alpha-1,6)Glc, in order of decreasing potency. Weakly inhibited by elsinotetraose. Not inhibited by maltose or nigerose. Functionally, D-mannose-binding lectin which binds alpha-D-linked mannose. Displays a high affinity for alpha-(1-6)-mannose oligomers. Able to interact with both terminal and internal alpha-D-mannosyl residues. Displays antiviral activity and therefore may contribute to defense against infections. The chain is Mannose-specific lectin from Narcissus pseudonarcissus (Daffodil).